Consider the following 491-residue polypeptide: Probable polygalacturonase (491 aa).

The chain crosses the membrane as a helical span at residues 15 to 35 (PIVSFYCFQVVSVLVAVVLLL). N-linked (GlcNAc...) asparagine glycosylation is found at Asn165, Asn175, and Asn214. PbH1 repeat units follow at residues 230–256 (SRNILIQGITILAPVRSPNTDGINPDS), 257–278 (CTNTRIEDCYIVSGDDCVAVKS), 319–340 (IQDVRAEDIVAINSESGIRIKT), and 348–369 (VKDIYVRGMTMKTMKWAFWMTG). Catalysis depends on Asp271, which acts as the Proton donor. N-linked (GlcNAc...) asparagine glycosylation is found at Asn399 and Asn421.

This sequence belongs to the glycosyl hydrolase 28 family.

Its subcellular location is the membrane. The catalysed reaction is (1,4-alpha-D-galacturonosyl)n+m + H2O = (1,4-alpha-D-galacturonosyl)n + (1,4-alpha-D-galacturonosyl)m.. In Vitis vinifera (Grape), this protein is Probable polygalacturonase.